Here is a 216-residue protein sequence, read N- to C-terminus: N-(5'-phosphoribosyl)anthranilate isomerase (216 aa).

The protein belongs to the TrpF family.

It carries out the reaction N-(5-phospho-beta-D-ribosyl)anthranilate = 1-(2-carboxyphenylamino)-1-deoxy-D-ribulose 5-phosphate. Its pathway is amino-acid biosynthesis; L-tryptophan biosynthesis; L-tryptophan from chorismate: step 3/5. This Methanopyrus kandleri (strain AV19 / DSM 6324 / JCM 9639 / NBRC 100938) protein is N-(5'-phosphoribosyl)anthranilate isomerase.